The primary structure comprises 26 residues: Coenzyme PQQ synthesis protein A (26 aa).

Residues 16-20 constitute a cross-link (pyrroloquinoline quinone (Glu-Tyr)); the sequence is EINMY.

The protein belongs to the PqqA family.

The protein operates within cofactor biosynthesis; pyrroloquinoline quinone biosynthesis. Its function is as follows. Required for coenzyme pyrroloquinoline quinone (PQQ) biosynthesis. PQQ is probably formed by cross-linking a specific glutamate to a specific tyrosine residue and excising these residues from the peptide. The polypeptide is Coenzyme PQQ synthesis protein A (Cereibacter sphaeroides (strain ATCC 17029 / ATH 2.4.9) (Rhodobacter sphaeroides)).